Here is a 224-residue protein sequence, read N- to C-terminus: Dehydration-responsive element-binding protein 1G (224 aa).

Residues 1 to 16 (MDVSAALSSDYSSGTP) are compositionally biased toward polar residues. Residues 1–46 (MDVSAALSSDYSSGTPSPVAADADDGSSAYMTVSSAPPKRRAGRTK) are disordered. A DNA-binding region (AP2/ERF) is located at residues 54–111 (VFKGVRRRNPGRWVCEVREPHGKQRIWLGTFETAEMAARAHDVAALALRGRAACLNFA).

This sequence belongs to the AP2/ERF transcription factor family. ERF subfamily.

The protein resides in the nucleus. Transcriptional activator that binds specifically to the DNA sequence 5'-[AG]CCGAC-3'. Binding to the C-repeat/DRE element mediates high salinity- and dehydration-inducible transcription. This Oryza sativa subsp. indica (Rice) protein is Dehydration-responsive element-binding protein 1G (DREB1G).